The primary structure comprises 252 residues: Geranylgeranylglyceryl phosphate synthase (252 aa).

Mg(2+) contacts are provided by Asp22 and Ser51. Sn-glycerol 1-phosphate-binding positions include 170–176 (YFEAGSG), 201–202 (GG), and 223–224 (GS).

It belongs to the GGGP/HepGP synthase family. Group II subfamily. Mg(2+) is required as a cofactor.

It is found in the cytoplasm. It catalyses the reaction sn-glycerol 1-phosphate + (2E,6E,10E)-geranylgeranyl diphosphate = sn-3-O-(geranylgeranyl)glycerol 1-phosphate + diphosphate. Its pathway is membrane lipid metabolism; glycerophospholipid metabolism. Its function is as follows. Prenyltransferase that catalyzes the transfer of the geranylgeranyl moiety of geranylgeranyl diphosphate (GGPP) to the C3 hydroxyl of sn-glycerol-1-phosphate (G1P). This reaction is the first ether-bond-formation step in the biosynthesis of archaeal membrane lipids. The protein is Geranylgeranylglyceryl phosphate synthase of Thermoplasma volcanium (strain ATCC 51530 / DSM 4299 / JCM 9571 / NBRC 15438 / GSS1).